The chain runs to 90 residues: Evasin P1126 (90 aa).

The N-terminal stretch at 1-25 is a signal peptide; the sequence is MTSHSAVRIAIFAVIALHSIFECLS. 3 disulfide bridges follow: cysteine 46–cysteine 62, cysteine 50–cysteine 64, and cysteine 58–cysteine 75. Asparagine 55 is a glycosylation site (N-linked (GlcNAc...) asparagine). An N-linked (GlcNAc...) asparagine glycan is attached at asparagine 77.

It is found in the secreted. In terms of biological role, salivary chemokine-binding protein which binds to host chemokines CXCL1, CXCL2, CXCL3, CXCL4, CXCL5, CXCL6, CXCL7, CXCL10 and CXCL11. The sequence is that of Evasin P1126 from Amblyomma cajennense (Cayenne tick).